A 662-amino-acid chain; its full sequence is Sodium/glucose cotransporter 1 (662 aa).

Residues 1–24 (MDSSTWSPATTATTEPLKPHERIR) lie on the Extracellular side of the membrane. Residues 25 to 47 (NAADISVIVIYFVVVMAVGLWAM) traverse the membrane as a helical segment. The Cytoplasmic portion of the chain corresponds to 48–66 (CSTNRGTVGGFFLAGRSMV). A helical membrane pass occupies residues 67-90 (WWPVGASLFASNIGSGHFVGLAGT). Residues 91 to 95 (GAAAG) lie on the Extracellular side of the membrane. A helical transmembrane segment spans residues 96–117 (IATGGFEWNALIWVVVLGWLFV). Residues 118–139 (PIYIKAGVVTMPEYLRKRFGGK) lie on the Cytoplasmic side of the membrane. A helical transmembrane segment spans residues 140 to 169 (RIQVYLSILSLMLYIFTKISADIFSGAIFI). Residues 170–176 (TLALGLD) are Extracellular-facing. The helical transmembrane segment at 177 to 193 (LYLAIFLLLAITGLYTI) threads the bilayer. The Cytoplasmic portion of the chain corresponds to 194–202 (TGGLAAVIY). A helical membrane pass occupies residues 203–221 (TDTLQTAIMLVGSFILTGF). The Extracellular portion of the chain corresponds to 222–275 (AFHEVGGYDAFMEKYMNAIPTVISDGNITIKKECYTPRADSFHIFRDPLKGDLP). Residue Asn-248 is glycosylated (N-linked (GlcNAc...) asparagine). 5 disulfide bridges follow: Cys-255/Cys-511, Cys-255/Cys-608, Cys-345/Cys-351, Cys-355/Cys-361, and Cys-517/Cys-522. Residues 276 to 295 (WPGLTFGLSILALWYWCTDQ) form a helical membrane-spanning segment. The Cytoplasmic segment spans residues 296-309 (VIVQRCLSAKNMSH). Residues 310-331 (VKAGCVMCGYFKLLPMFVIVMP) traverse the membrane as a helical segment. The Extracellular segment spans residues 332 to 375 (GMISRVLYTEKIACTVPSECEKYCGTKVGCSNIAYPTLVVELMP). The helical transmembrane segment at 376–406 (NGLRGLMLSVMLASLMSSLTSIFNSASTLFT) threads the bilayer. Residues 407–422 (MDVYTKIRKRASEKEL) are Cytoplasmic-facing. The helical transmembrane segment at 423-444 (MIAGRLFILVLIGISIAWVPIV) threads the bilayer. The Extracellular segment spans residues 445-451 (QSAQSGQ). Residues 452 to 477 (LFDYIQSVTSYLGPPIAAVFLLAIFC) traverse the membrane as a helical segment. Over 478 to 481 (KRVN) the chain is Cytoplasmic. A helical transmembrane segment spans residues 482–504 (EEGAFWGLVIGCMIGLARMITEF). The Extracellular segment spans residues 505 to 525 (AYGTGSCVEPSNCPTIICGVH). Residues 526-547 (YLYFAIILFVISIIIVLVVSLF) form a helical membrane-spanning segment. Residues 548–642 (TKPIPDVHLY…TSEKPLWRTV (95 aa)) are Cytoplasmic-facing. Phosphothreonine is present on Thr-587. The helical transmembrane segment at 643-660 (VNINGIILLTVAVFCHAY) threads the bilayer. Over 661–662 (FA) the chain is Extracellular.

This sequence belongs to the sodium:solute symporter (SSF) (TC 2.A.21) family. N-glycosylation is not necessary for the cotransporter function.

The protein localises to the apical cell membrane. It carries out the reaction D-glucose(out) + 2 Na(+)(out) = D-glucose(in) + 2 Na(+)(in). The enzyme catalyses D-galactose(out) + 2 Na(+)(out) = D-galactose(in) + 2 Na(+)(in). With respect to regulation, enhanced by the interaction with PDZK1IP1/MAP17; but unlike SLC5A2/SGLT2, PDZK1IP1 is not essential for SLC5A1 transporter activity. Possibly modulated by cholesterol binding. In terms of biological role, electrogenic Na(+)-coupled sugar symporter that actively transports D-glucose or D-galactose at the plasma membrane, with a Na(+) to sugar coupling ratio of 2:1. Transporter activity is driven by a transmembrane Na(+) electrochemical gradient set by the Na(+)/K(+) pump. Has a primary role in the transport of dietary monosaccharides from enterocytes to blood. Responsible for the absorption of D-glucose or D-galactose across the apical brush-border membrane of enterocytes, whereas basolateral exit is provided by GLUT2. Additionally, functions as a D-glucose sensor in enteroendocrine cells, triggering the secretion of the incretins GCG and GIP that control food intake and energy homeostasis. Together with SGLT2, functions in reabsorption of D-glucose from glomerular filtrate, playing a nonredundant role in the S3 segment of the proximal tubules. Transports D-glucose into endometrial epithelial cells, controlling glycogen synthesis and nutritional support for the embryo as well as the decidual transformation of endometrium prior to conception. Acts as a water channel enabling passive water transport in response to the osmotic gradient created upon sugar and Na(+) uptake. Has high water conductivity comparable to aquaporins and therefore is expected to play an important role in transepithelial water permeability, especially in the small intestine. The sequence is that of Sodium/glucose cotransporter 1 (SLC5A1) from Sus scrofa (Pig).